The sequence spans 254 residues: Cyclin homolog (254 aa).

Belongs to the cyclin family. Cyclin D subfamily.

In terms of biological role, may be highly relevant to the process of cellular transformation and rapid T-cell proliferation effected by HVS during latent infections of T-cells in susceptible hosts. This chain is Cyclin homolog (72), found in Saimiriine herpesvirus 2 (strain 11) (SaHV-2).